Here is a 365-residue protein sequence, read N- to C-terminus: UDP-N-acetylglucosamine--N-acetylmuramyl-(pentapeptide) pyrophosphoryl-undecaprenol N-acetylglucosamine transferase (365 aa).

UDP-N-acetyl-alpha-D-glucosamine contacts are provided by residues 17 to 19 (TGG), asparagine 129, arginine 167, serine 194, isoleucine 250, 269 to 274 (ALTVSE), and glutamine 295.

Belongs to the glycosyltransferase 28 family. MurG subfamily.

The protein resides in the cell inner membrane. The enzyme catalyses di-trans,octa-cis-undecaprenyl diphospho-N-acetyl-alpha-D-muramoyl-L-alanyl-D-glutamyl-meso-2,6-diaminopimeloyl-D-alanyl-D-alanine + UDP-N-acetyl-alpha-D-glucosamine = di-trans,octa-cis-undecaprenyl diphospho-[N-acetyl-alpha-D-glucosaminyl-(1-&gt;4)]-N-acetyl-alpha-D-muramoyl-L-alanyl-D-glutamyl-meso-2,6-diaminopimeloyl-D-alanyl-D-alanine + UDP + H(+). It functions in the pathway cell wall biogenesis; peptidoglycan biosynthesis. In terms of biological role, cell wall formation. Catalyzes the transfer of a GlcNAc subunit on undecaprenyl-pyrophosphoryl-MurNAc-pentapeptide (lipid intermediate I) to form undecaprenyl-pyrophosphoryl-MurNAc-(pentapeptide)GlcNAc (lipid intermediate II). In Shewanella violacea (strain JCM 10179 / CIP 106290 / LMG 19151 / DSS12), this protein is UDP-N-acetylglucosamine--N-acetylmuramyl-(pentapeptide) pyrophosphoryl-undecaprenol N-acetylglucosamine transferase.